Here is a 261-residue protein sequence, read N- to C-terminus: MLDIKNPIEARKVIRKNEYRNQTAGTANKYVQGNLCILPSKYAMDFASFCQKNPKPCPLIGFGTKGDPSLKDLGDIDIRTDVPQYRIWEKGKIIDEPYDIKKYWNEDLTTFVLGCSMSFELPLIEAGIPIQHIENDTIVPMYRTSIDCEPAGQFSGKLVVSMRPLNSKDAIRSIQISSRFPAVHGAPIHLGDPSEIGIKDIMNPEYGDPPKAFKNNEIPVFWACGVTPQSVLQDSKPDFCITHAPGKMLITDKLNNDLAAL.

This sequence belongs to the D-glutamate cyclase family.

The sequence is that of Putative hydro-lyase SAR11_0660 from Pelagibacter ubique (strain HTCC1062).